Consider the following 157-residue polypeptide: Ubiquitin-like protein 4A (157 aa).

The region spanning 1–76 (MQLTVKALQG…LNLVVKPLEK (76 aa)) is the Ubiquitin-like domain. Residue lysine 48 forms a Glycyl lysine isopeptide (Lys-Gly) (interchain with G-Cter in ubiquitin) linkage. The residue at position 90 (serine 90) is a Phosphoserine. Positions 96–138 (WQLISKVLARHFSVADASRVLEQLQRDYDRSLSRLTLDDIERL) are required and sufficient for interaction with BAG6.

As to quaternary structure, component of the BAG6/BAT3 complex, at least composed of BAG6, UBL4A and GET4/TRC35. Interacts with BAG6; the interaction is direct and required for UBL4A protein stability. Interacts with USP13; may be indirect via BAG6. Post-translationally, polyubiquitinated. Ubiquitination by AMFR and deubiquitination by USP13 may regulate the interaction between the BAG6/BAT3 complex and SGTA and therefore may regulate client proteins fate.

The protein localises to the cytoplasm. The protein resides in the cytosol. It localises to the nucleus. Its function is as follows. As part of a cytosolic protein quality control complex, the BAG6/BAT3 complex, maintains misfolded and hydrophobic patches-containing proteins in a soluble state and participates in their proper delivery to the endoplasmic reticulum or alternatively can promote their sorting to the proteasome where they undergo degradation. The BAG6/BAT3 complex is involved in the post-translational delivery of tail-anchored/type II transmembrane proteins to the endoplasmic reticulum membrane. Recruited to ribosomes, it interacts with the transmembrane region of newly synthesized tail-anchored proteins and together with SGTA and ASNA1 mediates their delivery to the endoplasmic reticulum. Client proteins that cannot be properly delivered to the endoplasmic reticulum are ubiquitinated and sorted to the proteasome. Similarly, the BAG6/BAT3 complex also functions as a sorting platform for proteins of the secretory pathway that are mislocalized to the cytosol either delivering them to the proteasome for degradation or to the endoplasmic reticulum. The BAG6/BAT3 complex also plays a role in the endoplasmic reticulum-associated degradation (ERAD), a quality control mechanism that eliminates unwanted proteins of the endoplasmic reticulum through their retrotranslocation to the cytosol and their targeting to the proteasome. It maintains these retrotranslocated proteins in an unfolded yet soluble state condition in the cytosol to ensure their proper delivery to the proteasome. This Mus musculus (Mouse) protein is Ubiquitin-like protein 4A.